We begin with the raw amino-acid sequence, 353 residues long: Protein disulfide isomerase CRELD2 (353 aa).

An N-terminal signal peptide occupies residues 1-24; sequence MRLPRRAALGLLPLLLLLPPAPEA. A CXXC motif is present at residues 31–34; that stretch reads CHRC. Cystine bridges form between Cys31/Cys34, Cys140/Cys154, Cys148/Cys166, and Cys168/Cys177. Positions 136 to 178 constitute an EGF-like 1 domain; sequence DCLACQGGSQRPCSGNGHCSGDGSRQGDGSCRCHMGYQGPLCT. The FU 1 repeat unit spans residues 193–240; the sequence is HSICTACDESCKTCSGLTNRDCGECEVGWVLDEGACVDVDECAAEPPP. N-linked (GlcNAc...) asparagine glycosylation occurs at Asn251. The FU 2 repeat unit spans residues 253-302; the sequence is SYTCEECDSSCVGCTGEGPGNCKECISGYAREHGQCADVDECSLAEKTCV. Residues 263–266 carry the CXXC motif; that stretch reads CVGC. Disulfide bonds link Cys263–Cys266, Cys294–Cys308, Cys301–Cys317, and Cys319–Cys330. Positions 290 to 331 constitute an EGF-like 2; calcium-binding domain; that stretch reads DVDECSLAEKTCVRKNENCYNTPGSYVCVCPDGFEETEDACV. The disordered stretch occupies residues 332–353; it reads PPAEAEATEGESPTQLPSREDL. Over residues 342 to 353 the composition is skewed to polar residues; it reads ESPTQLPSREDL.

The protein belongs to the CRELD family. Interacts with CHRNA4. Component of a complex containing at least CRELD2, MANF, MATN3 and PDIA4. In terms of tissue distribution, ubiquitously expressed. Highly expressed in skeletal muscle, heart, liver, kidney and placenta.

The protein localises to the endoplasmic reticulum. It carries out the reaction Catalyzes the rearrangement of -S-S- bonds in proteins.. Protein disulfide isomerase. Might play a role in the unfolded protein response. May regulate transport of alpha4-beta2 neuronal acetylcholine receptor. This is Protein disulfide isomerase CRELD2 (CRELD2) from Homo sapiens (Human).